Reading from the N-terminus, the 364-residue chain is Isoflavone 4'-O-methyltransferase (364 aa).

S-adenosyl-L-methionine-binding positions include 206–209 (VGGG), Asp-230, 230–231 (DQ), 250–251 (DM), and Lys-264. His-268 (proton acceptor) is an active-site residue.

This sequence belongs to the class I-like SAM-binding methyltransferase superfamily. Cation-independent O-methyltransferase family. COMT subfamily. As to quaternary structure, homodimer.

The catalysed reaction is a 4'-hydroxyisoflavone + S-adenosyl-L-methionine = a 4'-methoxyisoflavone + S-adenosyl-L-homocysteine + H(+). The enzyme catalyses (2R,3S)-2,4',7-trihydroxyisoflavanone + S-adenosyl-L-methionine = (2R,3S)-2,7-dihydroxy-4'-methoxyisoflavanone + S-adenosyl-L-homocysteine + H(+). Its function is as follows. 2-hydroxyisoflavanone 4'-O-methyltransferase involved in the biosynthesis of the phytoalexin medicarpin. Has also an in vitro (+)-6a-hydroxymaackiain-3-0-methyltransferase activity, converting the pterocarpan 6a-hydroxymaackiain into pisatin. No activity with di- or trihydroxylated isoflavones, including daidzein and genistein, or with (-)-medicarpin and maackiain. The dual activity for either 3- or 4'-O-methylation depends upon substrate availability. The sequence is that of Isoflavone 4'-O-methyltransferase (HI4'OMT) from Medicago truncatula (Barrel medic).